A 485-amino-acid polypeptide reads, in one-letter code: Probable glycine dehydrogenase (decarboxylating) subunit 2 (485 aa).

At Lys-269 the chain carries N6-(pyridoxal phosphate)lysine.

The protein belongs to the GcvP family. C-terminal subunit subfamily. In terms of assembly, the glycine cleavage system is composed of four proteins: P, T, L and H. In this organism, the P 'protein' is a heterodimer of two subunits. Pyridoxal 5'-phosphate serves as cofactor.

It carries out the reaction N(6)-[(R)-lipoyl]-L-lysyl-[glycine-cleavage complex H protein] + glycine + H(+) = N(6)-[(R)-S(8)-aminomethyldihydrolipoyl]-L-lysyl-[glycine-cleavage complex H protein] + CO2. In terms of biological role, the glycine cleavage system catalyzes the degradation of glycine. The P protein binds the alpha-amino group of glycine through its pyridoxal phosphate cofactor; CO(2) is released and the remaining methylamine moiety is then transferred to the lipoamide cofactor of the H protein. This chain is Probable glycine dehydrogenase (decarboxylating) subunit 2, found in Chlorobium phaeovibrioides (strain DSM 265 / 1930) (Prosthecochloris vibrioformis (strain DSM 265)).